A 301-amino-acid polypeptide reads, in one-letter code: Probable protein phosphatase 2C 4 (301 aa).

Over residues 1 to 18 (MGPYLSQPNKNKTTTSGE) the composition is skewed to polar residues. The segment at 1-20 (MGPYLSQPNKNKTTTSGEGK) is disordered. The PPM-type phosphatase domain occupies 23–298 (IFAASEMQGW…DNMTTLIIYL (276 aa)). Asp57, Gly58, Asp237, and Asp289 together coordinate Mn(2+).

Belongs to the PP2C family. The cofactor is Mg(2+). Mn(2+) serves as cofactor.

The protein resides in the membrane. The catalysed reaction is O-phospho-L-seryl-[protein] + H2O = L-seryl-[protein] + phosphate. It carries out the reaction O-phospho-L-threonyl-[protein] + H2O = L-threonyl-[protein] + phosphate. In terms of biological role, enzyme with a broad specificity. The protein is Probable protein phosphatase 2C 4 of Paramecium tetraurelia.